Here is a 420-residue protein sequence, read N- to C-terminus: Threonine aspartase 1 (420 aa).

Positions 1 to 23 (MTMEKGMSSGEGLPSRSSQVSAG) are disordered. Catalysis depends on threonine 234, which acts as the Nucleophile.

Belongs to the Ntn-hydrolase family. Intramolecular proteolysis generates 2 subunits, alpha and beta, which reassemble through a non-covalent association to form the fully active enzyme.

Its function is as follows. Protease responsible for KMT2A/MLL1 processing and activation. It also activates KMT2D/MLL2. Through substrate activation, it controls the expression of HOXA genes, and the expression of key cell cycle regulators including CCNA1, CCNB1, CCNE1 and CDKN2A. This Homo sapiens (Human) protein is Threonine aspartase 1 (TASP1).